A 551-amino-acid polypeptide reads, in one-letter code: Bestrophin-1 (551 aa).

Residues 1–31 (MTITYTNKVANARLGSFSSLLLCWRGSIYKL) are Cytoplasmic-facing. A10 is a binding site for Ca(2+). Residues 32 to 51 (LYGEFLVFIFLYYSIRGLYR) form a helical membrane-spanning segment. Residues 52 to 60 (MVLSSDQQL) are Extracellular-facing. The chain crosses the membrane as a helical span at residues 61-82 (LFEKLALYCDSYIQLIPISFVL). Topologically, residues 83–237 (GFYVTLVVSR…DWISIPLVYT (155 aa)) are cytoplasmic. The chain crosses the membrane as a helical span at residues 238 to 255 (QVVTVAVYSFFLACLIGR). The Extracellular portion of the chain corresponds to 256–274 (QFLNPNKDYPGHEMDLVVP). Residues 275 to 288 (VFTILQFLFYMGWL) traverse the membrane as a helical segment. At 289–551 (KVAEQLINPF…EAGTKPVLYE (263 aa)) the chain is on the cytoplasmic side. Ca(2+) is bound by residues Q293, N296, D301, and D304. Residues 346–379 (PYTAASARSRRHSFMGSTFNISLKKEDLELWSKE) form an auto-inhibitory segment region. Residues 459-489 (SHCGPQAPSSHPTEQSAPSSSDTGDGPSTDY) are disordered. A compositionally biased stretch (polar residues) spans 465–475 (APSSHPTEQSA). The segment covering 476–488 (PSSSDTGDGPSTD) has biased composition (low complexity).

Belongs to the anion channel-forming bestrophin (TC 1.A.46) family. Calcium-sensitive chloride channel subfamily. Interacts with YWHAG; this interaction promotes the ligand-gated L-glutamate channel activity leading to the positive regulation of NMDA glutamate receptor activity through the L-glutamate secretion.

The protein localises to the cell membrane. It localises to the basolateral cell membrane. The catalysed reaction is 4-aminobutanoate(in) = 4-aminobutanoate(out). The enzyme catalyses L-glutamate(out) = L-glutamate(in). It catalyses the reaction chloride(in) = chloride(out). It carries out the reaction hydrogencarbonate(in) = hydrogencarbonate(out). The catalysed reaction is D-serine(in) = D-serine(out). Its activity is regulated as follows. Inactivated by sulfhydryl-reactive agents. Functionally, ligand-gated anion channel that allows the movement of anions across cell membranes when activated by calcium (Ca2+). Allows the movement of chloride and hydrogencarbonate. Found in a partially open conformation leading to significantly smaller chloride movement. Upon F2R/PAR-1 activation, the sequestered calcium is released into the cytosol of astrocytes, leading to the (Ca2+)-dependent release of L-glutamate into the synaptic cleft that targets the neuronal postsynaptic GRIN2A/NMDAR receptor resulting in the synaptic plasticity regulation. Upon activation of the norepinephrine-alpha-1 adrenergic receptor signaling pathway, transports as well D-serine than L-glutamate in a (Ca2+)-dependent manner, leading to activation of adjacent NMDAR receptors and therefore regulates the heterosynaptic long-term depression and metaplasticity during initial memory acquisition. Releases the 4-aminobutanoate neurotransmitter in a (Ca2+)-dependent manner, and participates in its tonic release from cerebellar glial cells. The sequence is that of Bestrophin-1 from Mus musculus (Mouse).